Consider the following 72-residue polypeptide: Translation initiation factor IF-1 (72 aa).

Residues 1 to 72 (MAKEDSIEMQ…SKGRIVFRAR (72 aa)) enclose the S1-like domain.

It belongs to the IF-1 family. In terms of assembly, component of the 30S ribosomal translation pre-initiation complex which assembles on the 30S ribosome in the order IF-2 and IF-3, IF-1 and N-formylmethionyl-tRNA(fMet); mRNA recruitment can occur at any time during PIC assembly.

Its subcellular location is the cytoplasm. One of the essential components for the initiation of protein synthesis. Stabilizes the binding of IF-2 and IF-3 on the 30S subunit to which N-formylmethionyl-tRNA(fMet) subsequently binds. Helps modulate mRNA selection, yielding the 30S pre-initiation complex (PIC). Upon addition of the 50S ribosomal subunit IF-1, IF-2 and IF-3 are released leaving the mature 70S translation initiation complex. This is Translation initiation factor IF-1 from Psychromonas ingrahamii (strain DSM 17664 / CCUG 51855 / 37).